Consider the following 3020-residue polypeptide: Protein furry homolog (3020 aa).

Y213 is modified (phosphotyrosine). Disordered regions lie at residues 1378–1404 (GSSP…LKGN), 1529–1554 (ASGT…ESKI), and 1746–1773 (SSPV…GNLP). Residues S1382 and S1383 each carry the phosphoserine modification. Positions 1752–1772 (SGLNSSSTSSSISLGGSSGNL) are enriched in low complexity. 2 positions are modified to phosphoserine: S1936 and S1940. Low complexity predominate over residues 1937–1956 (RSSSPDLSSSSKLTASRKST). Disordered stretches follow at residues 1937–2042 (RSSS…PSHV) and 2355–2384 (LQNS…SNSN). The segment covering 1966–1976 (PGSGGGGGGSG) has biased composition (gly residues). Residues 2016–2042 (ACTQQGLSSKTRSNSSLKESLTDPSHV) show a composition bias toward polar residues. Positions 2369 to 2384 (AVTRSASSTSSGSNSN) are enriched in low complexity. Phosphoserine is present on residues S2427 and S2428. A disordered region spans residues 2439–2458 (TSLVSSEDGPREQENMDDTN). S2495 bears the Phosphoserine mark. A disordered region spans residues 2508–2535 (EERQLSRSTPSLNKMSHEDSDESSEEDL). T2516 carries the post-translational modification Phosphothreonine; by CDK1. A compositionally biased stretch (acidic residues) spans 2526–2535 (DSDESSEEDL). Phosphoserine is present on S2815.

Belongs to the furry protein family. In terms of assembly, when phosphorylated by CDK1, interacts with PLK1; this interaction occurs in mitotic cells, but not in interphase cells, and leads to further FRY phosphorylation by PLK1. Post-translationally, phosphorylated by AURKA, CDK1 and PLK1.

Its subcellular location is the cytoplasm. The protein resides in the cytoskeleton. It is found in the microtubule organizing center. It localises to the centrosome. The protein localises to the spindle pole. Plays a crucial role in the structural integrity of mitotic centrosomes and in the maintenance of spindle bipolarity by promoting PLK1 activity at the spindle poles in early mitosis. May function as a scaffold promoting the interaction between AURKA and PLK1, thereby enhancing AURKA-mediated PLK1 phosphorylation. This is Protein furry homolog (Fry) from Mus musculus (Mouse).